We begin with the raw amino-acid sequence, 320 residues long: Probable cell division protein WhiA (320 aa).

A DNA-binding region (H-T-H motif) is located at residues 276 to 310 (TLKELGEMVAGGKISKSGINHRLRKIDEIAERLRA).

It belongs to the WhiA family.

Its function is as follows. Involved in cell division and chromosome segregation. The protein is Probable cell division protein WhiA of Geobacillus thermodenitrificans (strain NG80-2).